The primary structure comprises 798 residues: Metabotropic glutamate receptor-like protein A (798 aa).

Positions Met1 to Ser23 are cleaved as a signal peptide. Topologically, residues Leu24–Leu388 are extracellular. N-linked (GlcNAc...) asparagine glycosylation is found at Asn186, Asn275, and Asn320. Residues Thr389–Phe409 form a helical membrane-spanning segment. The Cytoplasmic portion of the chain corresponds to Arg410–Ser419. A helical membrane pass occupies residues Pro420–Phe440. Residues Ser441–Gly447 are Extracellular-facing. The chain crosses the membrane as a helical span at residues Ile448 to Leu468. At Val469 to Tyr494 the chain is on the cytoplasmic side. A helical transmembrane segment spans residues Pro495–Gly515. Topologically, residues Asp516–Val545 are extracellular. The chain crosses the membrane as a helical span at residues Ala546–Phe566. Residues Lys567–Lys580 lie on the Cytoplasmic side of the membrane. A helical membrane pass occupies residues Pro581 to Val601. The Extracellular segment spans residues Ser602 to Gln609. A helical transmembrane segment spans residues Val610 to Gly630. Residues Ser631–Val798 lie on the Cytoplasmic side of the membrane. A coiled-coil region spans residues Ala714–Lys771. Positions Glu752–Glu774 are enriched in basic and acidic residues. Residues Glu752–Val798 form a disordered region.

This sequence in the N-terminal section; belongs to the BMP lipoprotein family. In the C-terminal section; belongs to the G-protein coupled receptor 3 family. GABA-B receptor subfamily.

Its subcellular location is the membrane. It is found in the cytoplasm. The protein localises to the cell cortex. The protein resides in the perinuclear region. Its function is as follows. May play an important role in the terminal differentiation. The polypeptide is Metabotropic glutamate receptor-like protein A (grlA) (Dictyostelium discoideum (Social amoeba)).